The primary structure comprises 388 residues: Valine--pyruvate aminotransferase (388 aa).

At Lys-234 the chain carries N6-(pyridoxal phosphate)lysine.

It belongs to the class-I pyridoxal-phosphate-dependent aminotransferase family. It depends on pyridoxal 5'-phosphate as a cofactor.

The catalysed reaction is L-valine + pyruvate = 3-methyl-2-oxobutanoate + L-alanine. The polypeptide is Valine--pyruvate aminotransferase (Mycobacterium tuberculosis (strain ATCC 25618 / H37Rv)).